The primary structure comprises 557 residues: MVLSDIEIANSVQMKSIKEVAEKLGIAEDALSLYGNYKAKISAGQLEALKDKPDGKLILVTAISPTPAGEGKTTTSVGLVDALAAIGKKAVIALREPSLGPVFGIKGGAAGGGHAQVVPMEDINLHFTGDFHAIGVANNLLAALIDNHIHHGNALGIDSRRITWKRAVDMNDRQLRHIVDGLQGKVNGVPREDGFDITVASEVMAILCLSENITDLKNRLEKIIIGYSFEGKPVTAKDLKAGGAMAAVLKDAIHPNLVQTLEHTPALIHGGPFANIAHGCNSVLATKLALKYADYAVTEAGFGADLGAEKFIDIKCRTSGLRPAAVVLVATIRALKMHGGVAKSDLAEENVQAVVDGLPNLEKHLENIQDVYGLPAVVAINKFPLDTEAELQAVYDACQKRGVDVVISDVWANGGAGGKELAEKVVELAEGDNHFQFVYNEEDSIETKLNKIVTKVYGGKGVRLTPAAKRELKQLDELGFSNYPICMAKTQYSFSDDAKKLGAPKDFVVTISQLKVSAGAGFIVALTGAIMTMPGLPKVPASEKIDVDKDGNISGLF.

Position 66–73 (66–73) interacts with ATP; it reads TPAGEGKT.

This sequence belongs to the formate--tetrahydrofolate ligase family.

It carries out the reaction (6S)-5,6,7,8-tetrahydrofolate + formate + ATP = (6R)-10-formyltetrahydrofolate + ADP + phosphate. It participates in one-carbon metabolism; tetrahydrofolate interconversion. The chain is Formate--tetrahydrofolate ligase 1 from Streptococcus sanguinis (strain SK36).